Here is a 216-residue protein sequence, read N- to C-terminus: Thiamine-phosphate synthase (216 aa).

Residues 35-39 (QLRDK) and asparagine 67 contribute to the 4-amino-2-methyl-5-(diphosphooxymethyl)pyrimidine site. Aspartate 68 and aspartate 87 together coordinate Mg(2+). Serine 106 contributes to the 4-amino-2-methyl-5-(diphosphooxymethyl)pyrimidine binding site. Position 132–134 (132–134 (TSS)) interacts with 2-[(2R,5Z)-2-carboxy-4-methylthiazol-5(2H)-ylidene]ethyl phosphate. Residue lysine 135 participates in 4-amino-2-methyl-5-(diphosphooxymethyl)pyrimidine binding. 2-[(2R,5Z)-2-carboxy-4-methylthiazol-5(2H)-ylidene]ethyl phosphate is bound by residues glycine 163 and 183–184 (IS).

The protein belongs to the thiamine-phosphate synthase family. It depends on Mg(2+) as a cofactor.

It catalyses the reaction 2-[(2R,5Z)-2-carboxy-4-methylthiazol-5(2H)-ylidene]ethyl phosphate + 4-amino-2-methyl-5-(diphosphooxymethyl)pyrimidine + 2 H(+) = thiamine phosphate + CO2 + diphosphate. The enzyme catalyses 2-(2-carboxy-4-methylthiazol-5-yl)ethyl phosphate + 4-amino-2-methyl-5-(diphosphooxymethyl)pyrimidine + 2 H(+) = thiamine phosphate + CO2 + diphosphate. The catalysed reaction is 4-methyl-5-(2-phosphooxyethyl)-thiazole + 4-amino-2-methyl-5-(diphosphooxymethyl)pyrimidine + H(+) = thiamine phosphate + diphosphate. The protein operates within cofactor biosynthesis; thiamine diphosphate biosynthesis; thiamine phosphate from 4-amino-2-methyl-5-diphosphomethylpyrimidine and 4-methyl-5-(2-phosphoethyl)-thiazole: step 1/1. Functionally, condenses 4-methyl-5-(beta-hydroxyethyl)thiazole monophosphate (THZ-P) and 2-methyl-4-amino-5-hydroxymethyl pyrimidine pyrophosphate (HMP-PP) to form thiamine monophosphate (TMP). The protein is Thiamine-phosphate synthase of Methanoregula boonei (strain DSM 21154 / JCM 14090 / 6A8).